Here is a 342-residue protein sequence, read N- to C-terminus: MTIALTGGGTGGHLAIVRCLLESAIKKNIECVYIGSQNGQDKAWFENEARFKEKFFLSSKGVVNQNKFGKISSLLHTLKLSKDCREIFKKYHIQAVFSVGGYSAAPASFAALFSHLPLFIHEQNSKSGSLNMLLKPFATKFFSAFEKEFSPYPVANKFFDNARIRKELKNIIFLGGSQGAQFINELALNLAPKLQEQNIKIIHQCGKNDFEKCKKHYQSLNIQADVFDFSSNLGEKMKNADLAISRAGASTLFELCANTLPAIFIPYPYATKNHQYFNAKFLQDQALCQIFTQDSINLDDFFKAMLKLNLEDISTRLQNIAQKNGGDILLEKALSNNLAFIR.

UDP-N-acetyl-alpha-D-glucosamine contacts are provided by residues 10–12 (TGG), Asn-124, Ser-177, and Gln-275.

It belongs to the glycosyltransferase 28 family. MurG subfamily.

Its subcellular location is the cell inner membrane. The catalysed reaction is di-trans,octa-cis-undecaprenyl diphospho-N-acetyl-alpha-D-muramoyl-L-alanyl-D-glutamyl-meso-2,6-diaminopimeloyl-D-alanyl-D-alanine + UDP-N-acetyl-alpha-D-glucosamine = di-trans,octa-cis-undecaprenyl diphospho-[N-acetyl-alpha-D-glucosaminyl-(1-&gt;4)]-N-acetyl-alpha-D-muramoyl-L-alanyl-D-glutamyl-meso-2,6-diaminopimeloyl-D-alanyl-D-alanine + UDP + H(+). Its pathway is cell wall biogenesis; peptidoglycan biosynthesis. Functionally, cell wall formation. Catalyzes the transfer of a GlcNAc subunit on undecaprenyl-pyrophosphoryl-MurNAc-pentapeptide (lipid intermediate I) to form undecaprenyl-pyrophosphoryl-MurNAc-(pentapeptide)GlcNAc (lipid intermediate II). In Campylobacter jejuni subsp. doylei (strain ATCC BAA-1458 / RM4099 / 269.97), this protein is UDP-N-acetylglucosamine--N-acetylmuramyl-(pentapeptide) pyrophosphoryl-undecaprenol N-acetylglucosamine transferase.